Reading from the N-terminus, the 226-residue chain is Neuron-specific vesicular protein calcyon (226 aa).

Residues 1-23 are disordered; that stretch reads MVKLGCSFSGKPGKETGDQDGAA. Residues 1 to 88 lie on the Extracellular side of the membrane; the sequence is MVKLGCSFSG…EEGRRLPTAR (88 aa). A helical membrane pass occupies residues 89-109; that stretch reads MIAFAMALLGCVLIMYKAIWY. Over 110-226 the chain is Cytoplasmic; that stretch reads DQFTCPDGFL…AEDVPSQSPK (117 aa). Positions 189–226 are disordered; sequence TAAAAAAAEGNEPSGKPLDMREKEDPQKAEDVPSQSPK. The span at 206–219 shows a compositional bias: basic and acidic residues; the sequence is LDMREKEDPQKAED.

It belongs to the NSG family. As to quaternary structure, interacts with CLTA. Expressed exclusively in neurons (at protein level). In all age groups, expressed at significantly higher levels in the medial prefrontal and orbital frontal cortices of spontaneously hypertensive rats (SHR), a model of attention deficit-hyperactivity disorder, than Wistar Kyoto (WKY) animals. In the motor cortex, dorsal striatum and nucleus accumbens, expression is significantly elevated in SHR only in younger animals.

It localises to the cytoplasmic vesicle membrane. It is found in the cell membrane. In terms of biological role, interacts with clathrin light chain A and stimulates clathrin self-assembly and clathrin-mediated endocytosis. The sequence is that of Neuron-specific vesicular protein calcyon (Caly) from Rattus norvegicus (Rat).